Consider the following 51-residue polypeptide: uncharacterized protein (51 aa).

In terms of biological role, this protein is non-essential for virus function. This is an uncharacterized protein from Sulfolobus spindle-shape virus 1 (SSV1).